Consider the following 626-residue polypeptide: NAD-dependent malic enzyme, mitochondrial (626 aa).

The transit peptide at 1 to 34 directs the protein to the mitochondrion; sequence MAIFSNQMRLSSTLLKRLHQRVAAAVNSSSSRNF. Arg-91 and Arg-125 together coordinate fumarate. The active-site Proton donor is the Tyr-146. (S)-malate is bound at residue Arg-199. Arg-199 is an NAD(+) binding site. The Proton acceptor role is filled by Lys-217. A divalent metal cation-binding residues include Glu-288, Asp-289, and Asp-312. Ala-348 and Ala-351 together coordinate NAD(+). Positions 467 and 512 each coordinate (S)-malate.

This sequence belongs to the malic enzymes family. Heterodimer of two related subunits. Mg(2+) is required as a cofactor. Mn(2+) serves as cofactor.

The protein resides in the mitochondrion matrix. The enzyme catalyses (S)-malate + NAD(+) = pyruvate + CO2 + NADH. The chain is NAD-dependent malic enzyme, mitochondrial from Solanum tuberosum (Potato).